Consider the following 211-residue polypeptide: Uracil phosphoribosyltransferase (211 aa).

Residues Arg78, Arg103, and 130–138 (DPMLATGGS) contribute to the 5-phospho-alpha-D-ribose 1-diphosphate site. Uracil is bound by residues Ile193 and 198 to 200 (GDA). Asp199 is a binding site for 5-phospho-alpha-D-ribose 1-diphosphate.

It belongs to the UPRTase family. Mg(2+) serves as cofactor.

The catalysed reaction is UMP + diphosphate = 5-phospho-alpha-D-ribose 1-diphosphate + uracil. It functions in the pathway pyrimidine metabolism; UMP biosynthesis via salvage pathway; UMP from uracil: step 1/1. Its activity is regulated as follows. Allosterically activated by GTP. Its function is as follows. Catalyzes the conversion of uracil and 5-phospho-alpha-D-ribose 1-diphosphate (PRPP) to UMP and diphosphate. This is Uracil phosphoribosyltransferase from Hahella chejuensis (strain KCTC 2396).